The chain runs to 664 residues: Alkaline/neutral invertase C, mitochondrial (664 aa).

3 positions are modified to phosphoserine: serine 41, serine 125, and serine 657.

Belongs to the glycosyl hydrolase 100 family. As to expression, expressed in seedlings, roots and flowers.

It localises to the mitochondrion. It catalyses the reaction Hydrolysis of terminal non-reducing beta-D-fructofuranoside residues in beta-D-fructofuranosides.. Mitochondrial invertase that cleaves sucrose into glucose and fructose and is involved in the regulation of aerial tissue development and floral transition. May be modulating hormone balance in relation to the radicle emergence. The protein is Alkaline/neutral invertase C, mitochondrial of Arabidopsis thaliana (Mouse-ear cress).